Consider the following 95-residue polypeptide: Co-chaperonin GroES (95 aa).

It belongs to the GroES chaperonin family. As to quaternary structure, heptamer of 7 subunits arranged in a ring. Interacts with the chaperonin GroEL.

It localises to the cytoplasm. Functionally, together with the chaperonin GroEL, plays an essential role in assisting protein folding. The GroEL-GroES system forms a nano-cage that allows encapsulation of the non-native substrate proteins and provides a physical environment optimized to promote and accelerate protein folding. GroES binds to the apical surface of the GroEL ring, thereby capping the opening of the GroEL channel. The polypeptide is Co-chaperonin GroES (Nitratidesulfovibrio vulgaris (strain DSM 19637 / Miyazaki F) (Desulfovibrio vulgaris)).